The sequence spans 1030 residues: Exportin-T (1030 aa).

The protein belongs to the exportin family.

It localises to the nucleus. The protein resides in the cytoplasm. Functionally, tRNA nucleus export receptor which facilitates tRNA translocation across the nuclear pore complex. Involved in pre-tRNA splicing, probably by affecting the interaction of pre-tRNA with splicing endonuclease. This is Exportin-T (los1) from Aspergillus niger (strain ATCC MYA-4892 / CBS 513.88 / FGSC A1513).